A 428-amino-acid chain; its full sequence is Enolase (428 aa).

Position 163 (glutamine 163) interacts with (2R)-2-phosphoglycerate. The active-site Proton donor is the glutamate 205. Mg(2+) contacts are provided by aspartate 242, glutamate 285, and aspartate 312. (2R)-2-phosphoglycerate is bound by residues lysine 337, arginine 366, serine 367, and lysine 388. Lysine 337 serves as the catalytic Proton acceptor.

Belongs to the enolase family. Mg(2+) serves as cofactor.

It localises to the cytoplasm. Its subcellular location is the secreted. It is found in the cell surface. The catalysed reaction is (2R)-2-phosphoglycerate = phosphoenolpyruvate + H2O. It participates in carbohydrate degradation; glycolysis; pyruvate from D-glyceraldehyde 3-phosphate: step 4/5. Functionally, catalyzes the reversible conversion of 2-phosphoglycerate (2-PG) into phosphoenolpyruvate (PEP). It is essential for the degradation of carbohydrates via glycolysis. The polypeptide is Enolase (Nitrosomonas europaea (strain ATCC 19718 / CIP 103999 / KCTC 2705 / NBRC 14298)).